We begin with the raw amino-acid sequence, 622 residues long: MPIRRLPPELINRIAAGEVVERPASAVKELVENALDAGATKIEVQADGGGLTRILVADDGCGLSAEELPVAVERHATSKLNPGEDGEYDLLRIGTLGFRGEALPSIGSVARLSIASRARKADGSQAEAHAIFVEGGAVGAVSPAAFPGPHGARVEVRDLFYATPARLKFMKSERAEALAITEELKRQAMAHEAVSFALDVDGRRTLRLPAEAAGPDGRLARLSAIMGREFSDNALAIDHEREGVRLSGFAGLPTFNRGNAAHQYLFVNGRPVRDRLLQGALRAAYADFLARDRHPLAALYVELDPSQVDVNVHPAKAEVRFRDPGLVRGLIVGGLRHALAAAGHRASTTVSMAALGGFRPQSMPPPQPSAAGFSAWRQGGWTPSPAAAAAQILPGLSEVSARAEPEALDAYAAGGMAEAASPAPVFDPVDYPLGAARAQVHETYIVAQTRDGVVIVDQHAAHERLVYERMKAEMAEGGVARQALLLPEVVELDPAEAERVVARADELAALGLVVEAFGPGAVLVREVPALLGETDAAGLVRDIADDLSENGQALALKERLEEVCGTMACHGSVRAGRRLTAPEMNALLRQMEATPHSGQCNHGRPTYVELKLADIERLFGRR.

It belongs to the DNA mismatch repair MutL/HexB family.

Its function is as follows. This protein is involved in the repair of mismatches in DNA. It is required for dam-dependent methyl-directed DNA mismatch repair. May act as a 'molecular matchmaker', a protein that promotes the formation of a stable complex between two or more DNA-binding proteins in an ATP-dependent manner without itself being part of a final effector complex. This chain is DNA mismatch repair protein MutL, found in Phenylobacterium zucineum (strain HLK1).